A 243-amino-acid chain; its full sequence is MAPCKYTPERVQMMWDAIAYNDSRRLAFMTDRPRWVHAHNFFDSAAQLFAYIVKNSISDVHVKPLEEGGREWVIDADFKDCADKAELMLKVNVGATAFMLFFEGKEDAVQRIMFSGNRGFHLWLKFCGKFKMDAPKSLREHWFNVFKQPAKLVSGDIRPGSFADCVRRAVHMYIGDAREDLVLRYWPDVDRDVFCNANKQIRAPFSYNYKGGDYSRCLTQQLQQRIKACSAGCLAGGTPPTSK.

The protein belongs to the baculoviridae LEF-1 family.

Its function is as follows. Required for late and very late gene expression. The protein is Late expression factor 1 (LEF-1) of Orgyia pseudotsugata multicapsid polyhedrosis virus (OpMNPV).